The primary structure comprises 122 residues: Probable DNA-directed RNA polymerase II subunit RPB11 (122 aa).

This sequence belongs to the archaeal Rpo11/eukaryotic RPB11/RPC19 RNA polymerase subunit family. In terms of assembly, component of the RNA polymerase II (Pol II) complex consisting of 12 subunits.

The protein localises to the nucleus. In terms of biological role, DNA-dependent RNA polymerase catalyzes the transcription of DNA into RNA using the four ribonucleoside triphosphates as substrates. Component of RNA polymerase II which synthesizes mRNA precursors and many functional non-coding RNAs. Pol II is the central component of the basal RNA polymerase II transcription machinery. It is composed of mobile elements that move relative to each other. RPB11 is part of the core element with the central large cleft. The protein is Probable DNA-directed RNA polymerase II subunit RPB11 (rpb-11) of Caenorhabditis briggsae.